The following is a 322-amino-acid chain: Ribosomal RNA small subunit methyltransferase H (322 aa).

Residues 35–37, aspartate 52, phenylalanine 79, aspartate 100, and glutamine 107 each bind S-adenosyl-L-methionine; that span reads GGY. A disordered region spans residues 254–322; it reads GATPAGSRHL…TAPKKEGRQG (69 aa). Positions 295–309 are enriched in low complexity; sequence SRSATLRVARRTAAA.

Belongs to the methyltransferase superfamily. RsmH family.

Its subcellular location is the cytoplasm. It carries out the reaction cytidine(1402) in 16S rRNA + S-adenosyl-L-methionine = N(4)-methylcytidine(1402) in 16S rRNA + S-adenosyl-L-homocysteine + H(+). Functionally, specifically methylates the N4 position of cytidine in position 1402 (C1402) of 16S rRNA. This chain is Ribosomal RNA small subunit methyltransferase H, found in Rhizorhabdus wittichii (strain DSM 6014 / CCUG 31198 / JCM 15750 / NBRC 105917 / EY 4224 / RW1) (Sphingomonas wittichii).